The primary structure comprises 380 residues: Transcription factor SOX-7 (380 aa).

Residues 24–43 are disordered; it reads SDGLSPPAVPRPSGDKSSES. Positions 45–113 form a DNA-binding region, HMG box; it reads IRRPMNAFMV…QHMQDYPNYK (69 aa). The disordered stretch occupies residues 139-167; that stretch reads SRDQNTLPEKNGIGRGEKEDRGEYSPGAT. The 121-residue stretch at 260 to 380 folds into the Sox C-terminal domain; the sequence is VSMMSSVSGC…ATYYNSYSVS (121 aa). Residues 323-328 form a required for beta-catenin-binding region; the sequence is EFDQYL.

In terms of assembly, interacts with CTNNB1/beta-catenin; this interaction may lead to the proteasomal degradation of active CTNNB1 and thus inhibition of Wnt/beta-catenin-stimulated transcription. Predominantly expressed in ovary, lung and heart. In the ovary, restricted to oocytes (at protein level). Present both in mesenchymal and epithelial cells in some adult tissues, including ear.

Its subcellular location is the nucleus. It localises to the cytoplasm. Functionally, binds to and activates the CDH5 promoter, hence plays a role in the transcriptional regulation of genes expressed in the hemogenic endothelium and blocks further differentiation into blood precursors. May be required for the survival of both hematopoietic and endothelial precursors during specification. May play a role in skeletal myogenesis and up-regulate the expression of muscle markers, such as PAX3/PAX7 and Meox1. Competes with GATA4 for binding and activation of the FGF3 promoter. Represses Wnt/beta-catenin-stimulated transcription. Probably acts by targeting CTNNB1 to proteasomal degradation. Binds the DNA sequence 5'-AACAAT-3'. The chain is Transcription factor SOX-7 (Sox7) from Mus musculus (Mouse).